The sequence spans 396 residues: Putative nickel insertion protein (396 aa).

It belongs to the LarC family.

The protein is Putative nickel insertion protein of Methanosarcina acetivorans (strain ATCC 35395 / DSM 2834 / JCM 12185 / C2A).